We begin with the raw amino-acid sequence, 42 residues long: uncharacterized protein (42 aa).

This is an uncharacterized protein from Dictyostelium discoideum (Social amoeba).